We begin with the raw amino-acid sequence, 579 residues long: Tricyclene synthase 0e23, chloroplastic (579 aa).

The transit peptide at 1 to 66 (MAFCISYLGA…ALCLNAHSTS (66 aa)) directs the protein to the chloroplast. N-linked (GlcNAc...) asparagine glycans are attached at residues Asn-27, Asn-204, and Asn-317. Mg(2+)-binding residues include Asp-336 and Asp-340. A DDXXD motif motif is present at residues 336–340 (DDIFD). 2 N-linked (GlcNAc...) asparagine glycosylation sites follow: Asn-382 and Asn-463. Mg(2+) contacts are provided by Asn-480 and Glu-488. A glycan (N-linked (GlcNAc...) asparagine) is linked at Asn-507.

The protein belongs to the terpene synthase family. Tpsg subfamily. Mg(2+) is required as a cofactor. Requires Mn(2+) as cofactor. As to expression, accumulates in flowers; mostly expressed in both upper and lower petal lobes, and, to a lower extent, in tube and stamens.

The protein resides in the plastid. The protein localises to the chloroplast stroma. The catalysed reaction is (2E)-geranyl diphosphate = tricyclene + diphosphate. It catalyses the reaction (2E)-geranyl diphosphate = (E)-beta-ocimene + diphosphate. The protein operates within secondary metabolite biosynthesis; terpenoid biosynthesis. Its function is as follows. Contributes to floral scent emission. The protein is Tricyclene synthase 0e23, chloroplastic (0e23) of Antirrhinum majus (Garden snapdragon).